A 348-amino-acid chain; its full sequence is 3-isopropylmalate dehydrogenase (348 aa).

Position 76–87 (76–87 (GPKWTDPNNRPE)) interacts with NAD(+). Arg94, Arg104, Arg132, and Asp217 together coordinate substrate. Residues Asp217, Asp241, and Asp245 each coordinate Mg(2+). 275-287 (GSAPDIAGKNVAN) is a binding site for NAD(+).

Belongs to the isocitrate and isopropylmalate dehydrogenases family. LeuB type 1 subfamily. In terms of assembly, homodimer. The cofactor is Mg(2+). Mn(2+) serves as cofactor.

The protein localises to the cytoplasm. It carries out the reaction (2R,3S)-3-isopropylmalate + NAD(+) = 4-methyl-2-oxopentanoate + CO2 + NADH. Its pathway is amino-acid biosynthesis; L-leucine biosynthesis; L-leucine from 3-methyl-2-oxobutanoate: step 3/4. Catalyzes the oxidation of 3-carboxy-2-hydroxy-4-methylpentanoate (3-isopropylmalate) to 3-carboxy-4-methyl-2-oxopentanoate. The product decarboxylates to 4-methyl-2 oxopentanoate. This is 3-isopropylmalate dehydrogenase from Staphylococcus aureus (strain Mu50 / ATCC 700699).